The sequence spans 225 residues: UPF0758 protein Sfri_3828 (225 aa).

Positions 102-224 constitute an MPN domain; it reads ILTNPDLTRD…IVSFAERGWI (123 aa). Positions 173, 175, and 186 each coordinate Zn(2+). The JAMM motif motif lies at 173-186; the sequence is HNHPSGIAEPSQAD.

The protein belongs to the UPF0758 family.

This is UPF0758 protein Sfri_3828 from Shewanella frigidimarina (strain NCIMB 400).